A 715-amino-acid chain; its full sequence is NADH-ubiquinone oxidoreductase chain 5 (715 aa).

The next 17 membrane-spanning stretches (helical) occupy residues 1–21 (MYLSIIILPLLGSIVAGFFGR), 30–50 (LITCLSVIITTGLAILAFFEV), 81–101 (LTVAMLIPVLIISSLVHIYSI), 119–139 (LFTFMMIILVTANNYLLMFVG), 140–160 (WEGVGVCSYLLVSFWFTRIAA), 177–197 (FLTIGMFVVLWTLGNLDYATV), 200–220 (LAPYINSDIATIIGICLLIGA), 241–261 (TPVSALIHAATMVTAGVYLLM), 274–294 (LLLCLWLGAITTVFSSLIGLF), 310–330 (LGMMVIAIGLSSYNVALFHLI), 331–351 (NHAFYKALLFLGAGSVIHAVA), 366–386 (LPLTYSVMLIASLSLVAFPYM), 403–423 (FSFSGVAVYIIATIGAIFTTL), 487–507 (GFFLSLPLVILALFSIFFGFI), 543–563 (TLFKLLPFIFTISFSLIALVL), 647–667 (IVTNYALFILVGFILYVFTFI), and 668–688 (SLLEGGLDLNLSLFILLLSLT).

Belongs to the complex I subunit 5 family.

The protein localises to the mitochondrion inner membrane. It carries out the reaction a ubiquinone + NADH + 5 H(+)(in) = a ubiquinol + NAD(+) + 4 H(+)(out). Core subunit of the mitochondrial membrane respiratory chain NADH dehydrogenase (Complex I) that is believed to belong to the minimal assembly required for catalysis. Complex I functions in the transfer of electrons from NADH to the respiratory chain. The immediate electron acceptor for the enzyme is believed to be ubiquinone. The protein is NADH-ubiquinone oxidoreductase chain 5 (ndh-5) of Neurospora crassa (strain ATCC 24698 / 74-OR23-1A / CBS 708.71 / DSM 1257 / FGSC 987).